A 527-amino-acid chain; its full sequence is N-acetylglucosamine-1-phosphodiester alpha-N-acetylglucosaminidase (527 aa).

The N-terminal stretch at 1–25 is a signal peptide; it reads MASSMGRFLLFFIALRGFLLEASGD. Positions 26–49 are cleaved as a propeptide — removed in mature form; sequence FGSGASRDDDVLLPYSRARARLAR. The Lumenal portion of the chain corresponds to 50 to 463; that stretch reads DCTRVHAGRL…SLLTRTTWLA (414 aa). Disulfide bonds link C116-C149, C133-C324, C308-C315, C363-C374, and C381-C390. N-linked (GlcNAc...) asparagine glycosylation is found at N209, N215, and N297. The region spanning 359–391 is the EGF-like domain; the sequence is DKLDCGPANCSQHGLCTETGCRCEAGWTGSNCS. N-linked (GlcNAc...) asparagine glycosylation is found at N367, N389, and N421. The chain crosses the membrane as a helical span at residues 464-484; sequence ITLALAFLLLISTAANVSLFL. The Cytoplasmic segment spans residues 485–527; that stretch reads GSRAARRRHLDGAYVYHPLQEVNGEHPAAEKEQLGDSSNPFKD. The segment at 498–505 is mediates the interaction with AP4M1; the sequence is YVYHPLQE. Residues 500 to 503 carry the Tyrosine-based internalization motif motif; it reads YHPL. Residues 523–527 carry the NPF internalization motif motif; sequence NPFKD.

Homotetramer arranged as two disulfide-linked homodimers. Interacts with AP4M1. In terms of processing, glycosylated. Contains complex N-linked oligosaccharides with appreciable amounts of sialic acid. The precursor is cleaved and activated in the trans-Golgi network by a furin endopeptidase.

Its subcellular location is the golgi apparatus. It is found in the golgi stack membrane. It localises to the trans-Golgi network. The enzyme catalyses N(4)-[6-(N-acetyl-alpha-D-glucosaminyl-1-phospho)-alpha-D-mannosyl-(1-&gt;2)-alpha-D-mannosyl-(glycan)]-L-asparaginyl-[protein] + H2O = N(4)-[6-phospho-alpha-D-mannosyl-(1-&gt;2)-alpha-D-mannosyl-(glycan)]-L-asparaginyl-[protein] + N-acetyl-D-glucosamine + H(+). It participates in protein modification; protein glycosylation. Catalyzes the second step in the formation of the mannose 6-phosphate targeting signal on lysosomal enzyme oligosaccharides by removing GlcNAc residues from GlcNAc-alpha-P-mannose moieties, which are formed in the first step. Also hydrolyzes UDP-GlcNAc, a sugar donor for Golgi N-acetylglucosaminyltransferases. This Bos taurus (Bovine) protein is N-acetylglucosamine-1-phosphodiester alpha-N-acetylglucosaminidase (NAGPA).